The chain runs to 341 residues: MTTQQPVAVLGGGSFGTAIANLLAENGHQVRQWMRDPEQAEAIRVNRENPRYLKGIRIRPEVEPVTDLTAVLDASELIFVALPSSALRSVLSPHVARLNGKMLVSLTKGIEAQSFKLMSQILEEIVPQARIGVLSGPNLAREIAEHALTATVVASEDEALCQEVQAALHGRTFRVYASNDRFGVELGGALKNVYAIIAGMAVALDMGENTKSMLITRALAEMTRFAVSQGANPMTFLGLAGVGDLIVTCSSPKSRNYQVGFALGQGLTLDEAVTRLGEVAEGVNTLKVLKVKAQEVQVYMPLVAGLHAILFEGRTLSQVIEALMRAEPKTDVDFISITGFN.

4 residues coordinate NADPH: Ser-14, Phe-15, Arg-35, and Lys-108. The sn-glycerol 3-phosphate site is built by Lys-108 and Gly-136. Ala-140 contributes to the NADPH binding site. Residues Lys-191, Asp-244, Ser-254, Arg-255, and Asn-256 each coordinate sn-glycerol 3-phosphate. Lys-191 functions as the Proton acceptor in the catalytic mechanism. Arg-255 contributes to the NADPH binding site. NADPH is bound by residues Val-279 and Glu-281.

Belongs to the NAD-dependent glycerol-3-phosphate dehydrogenase family.

Its subcellular location is the cytoplasm. The catalysed reaction is sn-glycerol 3-phosphate + NAD(+) = dihydroxyacetone phosphate + NADH + H(+). It catalyses the reaction sn-glycerol 3-phosphate + NADP(+) = dihydroxyacetone phosphate + NADPH + H(+). The protein operates within membrane lipid metabolism; glycerophospholipid metabolism. Catalyzes the reduction of the glycolytic intermediate dihydroxyacetone phosphate (DHAP) to sn-glycerol 3-phosphate (G3P), the key precursor for phospholipid synthesis. In Pseudomonas syringae pv. syringae (strain B728a), this protein is Glycerol-3-phosphate dehydrogenase [NAD(P)+].